The chain runs to 102 residues: MTQEKMYPHLFSERCANQHQHRTAEEKKYVSEKQLIHWRCEEPSAHHNSIDIKRMKHFGSALRLRQTFHLDTADHPCVITMNPALPWKLEGSNSTSTLPLPA.

In terms of tissue distribution, expressed in normal and neoplastic endometrial tissues.

Its function is as follows. May act as a potential tumor suppressor. The polypeptide is Protein CASC2, isoform 3 (CASC2) (Homo sapiens (Human)).